The sequence spans 442 residues: D-serine dehydratase (442 aa).

Residue lysine 118 is modified to N6-(pyridoxal phosphate)lysine.

It belongs to the serine/threonine dehydratase family. DsdA subfamily. As to quaternary structure, monomer. Pyridoxal 5'-phosphate is required as a cofactor.

It carries out the reaction D-serine = pyruvate + NH4(+). This Citrobacter koseri (strain ATCC BAA-895 / CDC 4225-83 / SGSC4696) protein is D-serine dehydratase.